A 246-amino-acid chain; its full sequence is Mitochondrial inner membrane protease ATP23 homolog (246 aa).

His-125 contributes to the a divalent metal cation binding site. The active site involves Glu-126. A divalent metal cation is bound at residue His-129.

Belongs to the peptidase M76 family. As to quaternary structure, interacts with XRCC6.

The polypeptide is Mitochondrial inner membrane protease ATP23 homolog (Homo sapiens (Human)).